We begin with the raw amino-acid sequence, 266 residues long: Glutamate racemase (266 aa).

Substrate is bound by residues 10–11 (DS) and 42–43 (YG). The active-site Proton donor/acceptor is the C73. A substrate-binding site is contributed by 74 to 75 (NT). The active-site Proton donor/acceptor is the C183. Substrate is bound at residue 184 to 185 (TH).

This sequence belongs to the aspartate/glutamate racemases family.

It carries out the reaction L-glutamate = D-glutamate. It participates in cell wall biogenesis; peptidoglycan biosynthesis. Provides the (R)-glutamate required for cell wall biosynthesis. This is Glutamate racemase from Lactobacillus johnsonii (strain CNCM I-12250 / La1 / NCC 533).